The chain runs to 360 residues: Protein phosphatase 1 regulatory subunit 7 (360 aa).

The segment at 1 to 64 (MAAERGAGQQ…GEEDPEEEHE (64 aa)) is disordered. Alanine 2 is subject to N-acetylalanine. Serine 12, serine 24, serine 27, serine 44, and serine 47 each carry phosphoserine. Over residues 17-34 (EVDRRVESEESGDEEGKK) the composition is skewed to basic and acidic residues. Residues 53–63 (ERGEEDPEEEH) show a composition bias toward acidic residues. 11 LRR repeats span residues 77–98 (DAED…EVLK), 99–120 (KVKT…EELQ), 121–142 (SLRE…EALT), 143–164 (ELEI…DKVT), 165–186 (QLKK…SNLH), 187–208 (QLQM…DTLT), 209–230 (NLES…DALT), 231–252 (NLTV…QNLV), 253–274 (NLQE…ENNN), 275–296 (KLTM…SHLT), and 297–318 (EPQE…DELK). Position 322 is a phosphoserine (serine 322). The LRRCT domain maps to 331 to 360 (NPLQKDPQYRRKVMLALPSVRQIDATFVRF).

This sequence belongs to the SDS22 family. As to quaternary structure, interacts with PPP1CA, PPP1CB and PPP1CC/PPP1G.

The protein resides in the nucleus. Regulatory subunit of protein phosphatase 1. This is Protein phosphatase 1 regulatory subunit 7 (PPP1R7) from Pongo abelii (Sumatran orangutan).